Here is a 3095-residue protein sequence, read N- to C-terminus: Centrosome-associated protein 350 (3095 aa).

2 disordered regions span residues 1 to 24 (MRSSKSKEVPLPNPRNSQSKETIQ) and 63 to 105 (TKKS…RSPL). The span at 14–24 (PRNSQSKETIQ) shows a compositional bias: polar residues. Ser-84 and Ser-140 each carry phosphoserine. 3 disordered regions span residues 219 to 239 (DEMPNRTKGSENNSKPSLNNM), 251 to 272 (SDSSPSSSACNSQRSDISKRQQ), and 430 to 493 (KILG…RAWS). A compositionally biased stretch (polar residues) spans 228-238 (SENNSKPSLNN). Over residues 251-265 (SDSSPSSSACNSQRS) the composition is skewed to low complexity. Basic and acidic residues-rich tracts occupy residues 438-457 (MEQKERRPTSNDRSGRERVA) and 464-476 (GRAESDPKLDVSH). Ser-468 carries the post-translational modification Phosphoserine. A compositionally biased stretch (low complexity) spans 481–491 (RSSARSRSSRA). Ser-503 carries the phosphoserine modification. Disordered regions lie at residues 538 to 623 (QAVR…QKNK) and 671 to 718 (ARQH…PPQP). 2 stretches are compositionally biased toward basic and acidic residues: residues 587–623 (YDTDEVRQYIVRQQEERRRRQHEEKKAQKEATEQKNK) and 690–699 (ESDKENKIQE). Positions 596–641 (IVRQQEERRRRQHEEKKAQKEATEQKNKRLQELYRRQREAFSKAKT) form a coiled coil. Ser-691 is subject to Phosphoserine. The segment covering 701-714 (PPSASSSSDLSLSE) has biased composition (low complexity). Ser-874 and Ser-935 each carry phosphoserine. The segment at 977–996 (SVSEGPLLSEGSLSEEEERR) is disordered. Positions 979–988 (SEGPLLSEGS) are enriched in low complexity. Residue Ser-1057 is modified to Phosphoserine. Disordered stretches follow at residues 1099–1128 (YEDDFVSSPGSGTLTERKSTLESQVDGSSL) and 1151–1265 (QHSS…SQKL). The span at 1119-1128 (LESQVDGSSL) shows a compositional bias: polar residues. Positions 1153–1168 (SSGARSAGSTRSSSAS) are enriched in low complexity. Over residues 1194–1206 (DEEKVQSDSERGS) the composition is skewed to basic and acidic residues. Ser-1200 is subject to Phosphoserine. Low complexity predominate over residues 1251-1265 (QKTPTSPLSPSSQKL). Thr-1253 bears the Phosphothreonine mark. 2 positions are modified to phosphoserine: Ser-1256 and Ser-1259. A coiled-coil region spans residues 1363–1402 (IKAQQQRHERDLALLKLKAEQEALECQRQLEETRNKTAQV). Disordered regions lie at residues 1490–1668 (AETD…GQDS), 1720–1739 (LRDKGEDDKMPPLRKKQRGL), 1787–1864 (KLKS…QRRQ), and 1893–2017 (AWDK…PVKS). A compositionally biased stretch (basic and acidic residues) spans 1503–1513 (QSKEGAVDSKR). 2 stretches are compositionally biased toward low complexity: residues 1517–1526 (SPSRDSYSES) and 1536–1545 (SSGSSRQDSP). The span at 1551–1564 (KENEKPFHGEKMES) shows a compositional bias: basic and acidic residues. Ser-1606 carries the phosphoserine modification. Basic and acidic residues predominate over residues 1624 to 1640 (ESHRRFNMEKKRGHHDD). Phosphoserine occurs at positions 1641 and 1646. A coiled-coil region spans residues 1700–1793 (KALKEKTKAE…LQEKLKSAGE (94 aa)). The segment covering 1787–1796 (KLKSAGEKKL) has biased composition (basic and acidic residues). At Ser-1812 the chain carries Phosphoserine. The span at 1819–1835 (ETRSPSPISISSSETSS) shows a compositional bias: low complexity. Composition is skewed to basic and acidic residues over residues 1845–1864 (SRMDEKFLTKREQKLMQRRQ) and 1894–1915 (WDKELVKPRTPKKEQESQRTEQ). Residues 1850–1893 (KFLTKREQKLMQRRQHAEELLEWKRRLDAEEAEIQQMEKQALAA) adopt a coiled-coil conformation. A Phosphoserine modification is found at Ser-1930. A compositionally biased stretch (low complexity) spans 1980–1994 (STSPSKHSPPKSCLS). A compositionally biased stretch (basic and acidic residues) spans 1999–2011 (ESSKASHRTEGHC). The stretch at 2043–2092 (IEGRIRALKDELRKRKSVVEQLKREQRKRQKERLKAQEASLLRQLETYDE) forms a coiled coil. A Phosphoserine modification is found at Ser-2108. Disordered stretches follow at residues 2116-2155 (KTLSSVSEKPKIKPHPLHRSETAKTWKSVTESERSRGSLA), 2191-2265 (IEHL…VEDA), 2286-2427 (LSSK…EISE), and 2440-2471 (VHSERLLELRSPTELMKSKERSDVGHEQGGTE). The segment covering 2133 to 2151 (HRSETAKTWKSVTESERSR) has biased composition (basic and acidic residues). Ser-2198 is subject to Phosphoserine. 2 stretches are compositionally biased toward basic and acidic residues: residues 2202 to 2214 (SSRKAQTESRDSL) and 2227 to 2259 (NAPDRIYDVSEAKAEDTSQKSEIQEIESMKLES). Polar residues predominate over residues 2286–2300 (LSSKELPSDSANVQQ). Over residues 2301–2331 (DLDKPATETSHEKEEALKEDQSNHSTDDRSP) the composition is skewed to basic and acidic residues. Positions 2349–2362 (DSTCSGQLSVPKES) are enriched in polar residues. Composition is skewed to basic and acidic residues over residues 2377–2387 (ISADEISKDDS) and 2395–2407 (LRKDSQSHRDRSQ). Residues 2409-2420 (TRSSRSRATGSG) are compositionally biased toward low complexity. Phosphoserine occurs at positions 2421 and 2450. A compositionally biased stretch (basic and acidic residues) spans 2455-2465 (MKSKERSDVGH). The region spanning 2504–2546 (GETDFAKGFWAGVELDKPEGNNNGTYDGIVYFVCKDKHGIFAP) is the CAP-Gly domain. Phosphothreonine is present on Thr-2671. Positions 2700–2731 (LLDLLTREKNQLEAQLKSSISEEKKSKQQLET) form a coiled coil. Positions 2767–2793 (QEFLDQKKVPPQDLPQNTEEQSPSVPS) are disordered. The span at 2780–2791 (LPQNTEEQSPSV) shows a compositional bias: polar residues. Residues Ser-2809 and Ser-2818 each carry the phosphoserine modification.

Part of a ternary complex that contains CEP350, CEP43 and MAPRE1. Interacts (via C-terminus) directly with CEP43 (via N-terminus). Interacts with NR1H3, PPARA, PPARD and PPARG. Interacts directly with microtubules. Interacts with the fusion protein CEP43-FGFR1, and by doing so recruits and activates PI3K and PLC-gamma. Interacts with CYLD. Interacts with CFAP157. Interacts with CEP19 (via C-terminus). Interacts with CEP78; promoting CEP78 localization to centrosome and centriole. Phosphorylated during mitosis.

It is found in the cytoplasm. The protein localises to the cytoskeleton. It localises to the microtubule organizing center. Its subcellular location is the centrosome. The protein resides in the spindle. It is found in the nucleus. The protein localises to the centriole. It localises to the cilium basal body. Functionally, plays an essential role in centriole growth by stabilizing a procentriolar seed composed of at least, SASS6 and CPAP. Required for anchoring microtubules to the centrosomes and for the integrity of the microtubule network. Recruits PPARA to discrete subcellular compartments and thereby modulates PPARA activity. Required for ciliation. The sequence is that of Centrosome-associated protein 350 from Mus musculus (Mouse).